The sequence spans 170 residues: Ureidoglycolate lyase (170 aa).

Belongs to the ureidoglycolate lyase family. In terms of assembly, homodimer. Requires Ni(2+) as cofactor.

The enzyme catalyses (S)-ureidoglycolate = urea + glyoxylate. The protein operates within nitrogen metabolism; (S)-allantoin degradation. Catalyzes the catabolism of the allantoin degradation intermediate (S)-ureidoglycolate, generating urea and glyoxylate. Involved in the utilization of allantoin as nitrogen source. The polypeptide is Ureidoglycolate lyase (Burkholderia mallei (strain NCTC 10247)).